A 114-amino-acid chain; its full sequence is Large ribosomal subunit protein uL22 (114 aa).

It belongs to the universal ribosomal protein uL22 family. Part of the 50S ribosomal subunit.

In terms of biological role, this protein binds specifically to 23S rRNA; its binding is stimulated by other ribosomal proteins, e.g. L4, L17, and L20. It is important during the early stages of 50S assembly. It makes multiple contacts with different domains of the 23S rRNA in the assembled 50S subunit and ribosome. The globular domain of the protein is located near the polypeptide exit tunnel on the outside of the subunit, while an extended beta-hairpin is found that lines the wall of the exit tunnel in the center of the 70S ribosome. The polypeptide is Large ribosomal subunit protein uL22 (Lysinibacillus sphaericus (strain C3-41)).